Here is a 314-residue protein sequence, read N- to C-terminus: 4-hydroxy-3-methylbut-2-enyl diphosphate reductase (314 aa).

Cys-18 is a binding site for [4Fe-4S] cluster. Positions 47 and 80 each coordinate (2E)-4-hydroxy-3-methylbut-2-enyl diphosphate. Dimethylallyl diphosphate is bound by residues His-47 and His-80. The isopentenyl diphosphate site is built by His-47 and His-80. Cys-102 is a binding site for [4Fe-4S] cluster. His-130 provides a ligand contact to (2E)-4-hydroxy-3-methylbut-2-enyl diphosphate. Residue His-130 coordinates dimethylallyl diphosphate. His-130 contacts isopentenyl diphosphate. The Proton donor role is filled by Glu-132. Residue Thr-171 coordinates (2E)-4-hydroxy-3-methylbut-2-enyl diphosphate. Cys-201 is a binding site for [4Fe-4S] cluster. The (2E)-4-hydroxy-3-methylbut-2-enyl diphosphate site is built by Ser-229, Ser-230, Asn-231, and Ser-273. Residues Ser-229, Ser-230, Asn-231, and Ser-273 each contribute to the dimethylallyl diphosphate site. Ser-229, Ser-230, Asn-231, and Ser-273 together coordinate isopentenyl diphosphate.

It belongs to the IspH family. [4Fe-4S] cluster serves as cofactor.

The catalysed reaction is isopentenyl diphosphate + 2 oxidized [2Fe-2S]-[ferredoxin] + H2O = (2E)-4-hydroxy-3-methylbut-2-enyl diphosphate + 2 reduced [2Fe-2S]-[ferredoxin] + 2 H(+). It carries out the reaction dimethylallyl diphosphate + 2 oxidized [2Fe-2S]-[ferredoxin] + H2O = (2E)-4-hydroxy-3-methylbut-2-enyl diphosphate + 2 reduced [2Fe-2S]-[ferredoxin] + 2 H(+). Its pathway is isoprenoid biosynthesis; dimethylallyl diphosphate biosynthesis; dimethylallyl diphosphate from (2E)-4-hydroxy-3-methylbutenyl diphosphate: step 1/1. It functions in the pathway isoprenoid biosynthesis; isopentenyl diphosphate biosynthesis via DXP pathway; isopentenyl diphosphate from 1-deoxy-D-xylulose 5-phosphate: step 6/6. Catalyzes the conversion of 1-hydroxy-2-methyl-2-(E)-butenyl 4-diphosphate (HMBPP) into a mixture of isopentenyl diphosphate (IPP) and dimethylallyl diphosphate (DMAPP). Acts in the terminal step of the DOXP/MEP pathway for isoprenoid precursor biosynthesis. The sequence is that of 4-hydroxy-3-methylbut-2-enyl diphosphate reductase from Phenylobacterium zucineum (strain HLK1).